We begin with the raw amino-acid sequence, 750 residues long: Photosystem I P700 chlorophyll a apoprotein A1 (750 aa).

The next 8 helical transmembrane spans lie at 70–93 (VFSA…FHGA), 156–179 (LYCT…FHYH), 195–219 (LNHH…HVSL), 291–309 (IAHH…GHMY), 346–369 (WHAQ…HHMY), 385–411 (LSLF…IFMV), 433–455 (AIIS…LYIH), and 531–549 (FLVH…LILL). 2 residues coordinate [4Fe-4S] cluster: Cys573 and Cys582. Helical transmembrane passes span 589–610 (HVFL…HFSW) and 664–686 (LSAY…MFLF). His675 contributes to the chlorophyll a' binding site. Positions 683 and 691 each coordinate chlorophyll a. Trp692 is a binding site for phylloquinone. A helical transmembrane segment spans residues 724 to 744 (AVGVTHYLLGGIATTWAFFLA).

This sequence belongs to the PsaA/PsaB family. The PsaA/B heterodimer binds the P700 chlorophyll special pair and subsequent electron acceptors. PSI consists of a core antenna complex that captures photons, and an electron transfer chain that converts photonic excitation into a charge separation. The eukaryotic PSI reaction center is composed of at least 11 subunits. P700 is a chlorophyll a/chlorophyll a' dimer, A0 is one or more chlorophyll a, A1 is one or both phylloquinones and FX is a shared 4Fe-4S iron-sulfur center. is required as a cofactor.

It is found in the plastid. The protein resides in the chloroplast thylakoid membrane. The enzyme catalyses reduced [plastocyanin] + hnu + oxidized [2Fe-2S]-[ferredoxin] = oxidized [plastocyanin] + reduced [2Fe-2S]-[ferredoxin]. Functionally, psaA and PsaB bind P700, the primary electron donor of photosystem I (PSI), as well as the electron acceptors A0, A1 and FX. PSI is a plastocyanin-ferredoxin oxidoreductase, converting photonic excitation into a charge separation, which transfers an electron from the donor P700 chlorophyll pair to the spectroscopically characterized acceptors A0, A1, FX, FA and FB in turn. Oxidized P700 is reduced on the lumenal side of the thylakoid membrane by plastocyanin. The sequence is that of Photosystem I P700 chlorophyll a apoprotein A1 from Nymphaea alba (White water-lily).